We begin with the raw amino-acid sequence, 300 residues long: Protoheme IX farnesyltransferase (300 aa).

9 helical membrane passes run 20–40 (ITKAGLAISVLFSSIAGYLLG), 49–69 (WSVLIVLAIGGYCMVGASNAY), 97–117 (VTALIVASLLTIIGIVLLYTI), 122–142 (AMFAAISIFLYTSIYTPLKTV), 145–165 (LSVFVGAFPGAIPFMLGWVAA), 176–196 (LFLIQFFWQFPHFWSIGWFLY), 217–237 (ALQVILYTIWLIIASLLPVLG), 242–262 (LFISPVAAVLVFLLGLWMLFY), and 278–298 (LMLVSVSYISLLQIVFIVDKF).

The protein belongs to the UbiA prenyltransferase family. Protoheme IX farnesyltransferase subfamily.

Its subcellular location is the cell inner membrane. It catalyses the reaction heme b + (2E,6E)-farnesyl diphosphate + H2O = Fe(II)-heme o + diphosphate. It functions in the pathway porphyrin-containing compound metabolism; heme O biosynthesis; heme O from protoheme: step 1/1. Its function is as follows. Converts heme B (protoheme IX) to heme O by substitution of the vinyl group on carbon 2 of heme B porphyrin ring with a hydroxyethyl farnesyl side group. The chain is Protoheme IX farnesyltransferase from Flavobacterium johnsoniae (strain ATCC 17061 / DSM 2064 / JCM 8514 / BCRC 14874 / CCUG 350202 / NBRC 14942 / NCIMB 11054 / UW101) (Cytophaga johnsonae).